The sequence spans 320 residues: Transcription termination/antitermination protein NusG (320 aa).

This sequence belongs to the NusG family.

Participates in transcription elongation, termination and antitermination. The sequence is that of Transcription termination/antitermination protein NusG from Mycoplasma pneumoniae (strain ATCC 29342 / M129 / Subtype 1) (Mycoplasmoides pneumoniae).